Here is a 632-residue protein sequence, read N- to C-terminus: Cytoplasmic polyadenylation element-binding protein 3 (632 aa).

The segment covering 1-11 (MQDDLLMDKSK) has biased composition (basic and acidic residues). Disordered regions lie at residues 1 to 89 (MQDD…TGGS) and 127 to 212 (FSPQ…RRAV). Residues 13–48 (QQRQQPQQPPSSQTQQQQKEAASVAEPPSSRESSPP) are compositionally biased toward low complexity. 2 stretches are compositionally biased toward polar residues: residues 65-89 (SFQQ…TGGS) and 135-169 (HQTQ…LTNK). Low complexity predominate over residues 170–193 (PSSSPNSSSPSPSNWNNQQNAAWN). 2 RRM domains span residues 375–466 (RKVF…PWNL) and 483–565 (KTIF…PYVL).

This sequence belongs to the RRM CPEB family. As to quaternary structure, following synaptic activity, forms amyloid-like oligomers. Aggregation requires an intact actin cytoskeleton. In embryos, expressed in the central nervous system, and intermediate and distal pronephric tubule segments of the embryonic kidney.

The protein resides in the cytoplasm. Its subcellular location is the nucleus. The protein localises to the synapse. It localises to the cell projection. It is found in the dendrite. The protein resides in the postsynaptic density. In terms of biological role, sequence-specific RNA-binding protein which acts as a translational repressor in the basal unstimulated state but, following neuronal stimulation, acts as a translational activator. Does not bind to the cytoplasmic polyadenylation element (CPE), a uridine-rich sequence element within the mRNA 3'-UTR, but binds to a U-rich loop within a stem-loop structure. Required for the consolidation and maintenance of hippocampal-based long term memory. Inhibits differentiation of intermediate mesoderm from an early stage to inhibit pronephric differentiation but induce neural differentiation. The sequence is that of Cytoplasmic polyadenylation element-binding protein 3 (cpeb3) from Xenopus tropicalis (Western clawed frog).